A 366-amino-acid chain; its full sequence is Anhydro-N-acetylmuramic acid kinase (366 aa).

Gly-10 to Asp-17 contacts ATP.

This sequence belongs to the anhydro-N-acetylmuramic acid kinase family.

The catalysed reaction is 1,6-anhydro-N-acetyl-beta-muramate + ATP + H2O = N-acetyl-D-muramate 6-phosphate + ADP + H(+). The protein operates within amino-sugar metabolism; 1,6-anhydro-N-acetylmuramate degradation. Its pathway is cell wall biogenesis; peptidoglycan recycling. Its function is as follows. Catalyzes the specific phosphorylation of 1,6-anhydro-N-acetylmuramic acid (anhMurNAc) with the simultaneous cleavage of the 1,6-anhydro ring, generating MurNAc-6-P. Is required for the utilization of anhMurNAc either imported from the medium or derived from its own cell wall murein, and thus plays a role in cell wall recycling. The polypeptide is Anhydro-N-acetylmuramic acid kinase (Legionella pneumophila (strain Lens)).